We begin with the raw amino-acid sequence, 322 residues long: Lipoyl synthase (322 aa).

Residues Cys-68, Cys-73, Cys-79, Cys-94, Cys-98, Cys-101, and Ser-309 each coordinate [4Fe-4S] cluster. A Radical SAM core domain is found at 80–298; it reads FNHGTASFMI…RVAGVEMGFS (219 aa).

It belongs to the radical SAM superfamily. Lipoyl synthase family. [4Fe-4S] cluster serves as cofactor.

Its subcellular location is the cytoplasm. The catalysed reaction is [[Fe-S] cluster scaffold protein carrying a second [4Fe-4S](2+) cluster] + N(6)-octanoyl-L-lysyl-[protein] + 2 oxidized [2Fe-2S]-[ferredoxin] + 2 S-adenosyl-L-methionine + 4 H(+) = [[Fe-S] cluster scaffold protein] + N(6)-[(R)-dihydrolipoyl]-L-lysyl-[protein] + 4 Fe(3+) + 2 hydrogen sulfide + 2 5'-deoxyadenosine + 2 L-methionine + 2 reduced [2Fe-2S]-[ferredoxin]. It functions in the pathway protein modification; protein lipoylation via endogenous pathway; protein N(6)-(lipoyl)lysine from octanoyl-[acyl-carrier-protein]: step 2/2. Its function is as follows. Catalyzes the radical-mediated insertion of two sulfur atoms into the C-6 and C-8 positions of the octanoyl moiety bound to the lipoyl domains of lipoate-dependent enzymes, thereby converting the octanoylated domains into lipoylated derivatives. The chain is Lipoyl synthase from Idiomarina loihiensis (strain ATCC BAA-735 / DSM 15497 / L2-TR).